Here is a 219-residue protein sequence, read N- to C-terminus: Ribose-5-phosphate isomerase A (219 aa).

Residues 28 to 31 (TGST), 81 to 84 (DGAD), and 94 to 97 (KGGG) contribute to the substrate site. The active-site Proton acceptor is Glu103. Position 121 (Lys121) interacts with substrate.

The protein belongs to the ribose 5-phosphate isomerase family. In terms of assembly, homodimer.

The enzyme catalyses aldehydo-D-ribose 5-phosphate = D-ribulose 5-phosphate. Its pathway is carbohydrate degradation; pentose phosphate pathway; D-ribose 5-phosphate from D-ribulose 5-phosphate (non-oxidative stage): step 1/1. Its function is as follows. Catalyzes the reversible conversion of ribose-5-phosphate to ribulose 5-phosphate. This Shewanella frigidimarina (strain NCIMB 400) protein is Ribose-5-phosphate isomerase A.